Reading from the N-terminus, the 649-residue chain is Quinol oxidase subunit 1 (649 aa).

At 1–13 the chain is on the extracellular side; the sequence is MKFKWDEFFVTGD. The chain crosses the membrane as a helical span at residues 14–34; it reads PLILGAQVSIALSTIAIIFVL. At 35–55 the chain is on the cytoplasmic side; it reads TYFKKWKWLWSEWITTVDHKK. The chain crosses the membrane as a helical span at residues 56–76; that stretch reads LGIMYIISAVIMLFRGGVDGL. The Extracellular segment spans residues 77–104; the sequence is MMRAQLALPNNSFLDSNHYNEIFTTHGT. His102 is a binding site for Fe(II)-heme a. The helical transmembrane segment at 105–125 threads the bilayer; the sequence is IMIIFMAMPFLIGLINVVVPL. Topologically, residues 126–139 are cytoplasmic; it reads QIGARDVAFPYLNN. The chain crosses the membrane as a helical span at residues 140-160; that stretch reads LSFWTFFVGAMLFNISFVIGG. Over 161 to 187 the chain is Extracellular; the sequence is SPNAGWTSYMPLASNDMSPGPGENYYL. The helical transmembrane segment at 188 to 208 threads the bilayer; that stretch reads LGLQIAGIGTLMTGINFMVTI. Over 209-228 the chain is Cytoplasmic; sequence LKMRTKGMTLMRMPMFTWTT. Residues 229–249 traverse the membrane as a helical segment; that stretch reads LITMVIIVFAFPVLTVALALL. Residues 250-273 lie on the Extracellular side of the membrane; the sequence is SFDRLFGAHFFTLEAGGMPMLWAN. A helical membrane pass occupies residues 274 to 294; it reads LFWIWGHPEVYIVILPAFGIF. Cu cation contacts are provided by His280 and Tyr284. Residues 280-284 constitute a cross-link (1'-histidyl-3'-tyrosine (His-Tyr)); that stretch reads HPEVY. Residues 295-305 lie on the Cytoplasmic side of the membrane; the sequence is SEIISSFARKQ. A helical transmembrane segment spans residues 306 to 326; that stretch reads LFGYTAMVGSIIAISVLSFLV. Topologically, residues 327 to 342 are extracellular; that stretch reads WTHHFFTMGNSASVNS. Residues His329 and His330 each coordinate Cu cation. Residues 343–363 form a helical membrane-spanning segment; that stretch reads FFSITTMAISIPTGVKIFNWL. Over 364–376 the chain is Cytoplasmic; it reads FTMYKGRISFTTP. A helical membrane pass occupies residues 377-397; sequence MLWALAFIPNFVIGGVTGVML. Topologically, residues 398–415 are extracellular; the sequence is AMAAADYQYHNTYFLVSH. His415 contributes to the heme a3 binding site. The helical transmembrane segment at 416–436 threads the bilayer; sequence FHYVLIAGTVFACFAGFIFWY. Position 417 (His417) interacts with Fe(II)-heme a. The Cytoplasmic portion of the chain corresponds to 437 to 451; it reads PKMFGHKLNERIGKW. Residues 452–472 traverse the membrane as a helical segment; that stretch reads FFWIFMIGFNICFFPQYFLGL. Topologically, residues 473–492 are extracellular; it reads QGMPRRIYTYGPNDGWTTLN. The chain crosses the membrane as a helical span at residues 493–513; sequence FISTVGAFMMGVGFLILCYNI. The Cytoplasmic portion of the chain corresponds to 514–585; it reads YYSFRYSTRE…KFKKIHMPSN (72 aa). Residues 586–603 form a helical membrane-spanning segment; that stretch reads SGRPFFMSVAFGIAGFGL. Over 604-606 the chain is Extracellular; that stretch reads VFE. The helical transmembrane segment at 607 to 624 threads the bilayer; that stretch reads WYWMGVVGLIGVLLCMVL. Residues 625-649 are Cytoplasmic-facing; it reads RSFEYDNGYYISVDEIKETERKISE.

Belongs to the heme-copper respiratory oxidase family. Requires Cu cation as cofactor. It depends on ferriheme a as a cofactor. Heme A3. serves as cofactor.

The protein resides in the cell membrane. The catalysed reaction is 2 a quinol + O2 = 2 a quinone + 2 H2O. It participates in energy metabolism; oxidative phosphorylation. In terms of biological role, catalyzes quinol oxidation with the concomitant reduction of oxygen to water. Major component for energy conversion during vegetative growth. In Bacillus spizizenii (strain ATCC 23059 / NRRL B-14472 / W23) (Bacillus subtilis subsp. spizizenii), this protein is Quinol oxidase subunit 1 (qoxB).